The chain runs to 296 residues: Tuberculosinyl adenosine transferase (296 aa).

It belongs to the diterpene synthase family. Homodimer. It depends on Mg(2+) as a cofactor.

The catalysed reaction is tuberculosinyl diphosphate + adenosine + H(+) = 1-tuberculosinyladenosine + diphosphate. The enzyme catalyses tuberculosinyl diphosphate + H2O = tuberculosinol + diphosphate. It catalyses the reaction tuberculosinyl diphosphate + H2O = (13R)-edaxadiene + diphosphate. It carries out the reaction tuberculosinyl diphosphate + H2O = (13S)-edaxadiene + diphosphate. Its function is as follows. Tuberculosinyl transferase that catalyzes the condensation of adenosine and tuberculosinyl diphosphate (TbPP) to generate 1-tuberculosinyladenosine (1-TbAd), which acts as an antiacid that directly protects M.tuberculosis from acid pH and physically remodels M.tuberculosis phagolysosomes. In addition, acts as a phosphatase that catalyzes the diphosphate-removal from TbPP to produce both tuberculosinol (TOH) and isotuberculosinol (iso-TOH). The sequence is that of Tuberculosinyl adenosine transferase from Mycobacterium tuberculosis (strain CDC 1551 / Oshkosh).